Reading from the N-terminus, the 223-residue chain is Deoxyribose-phosphate aldolase (223 aa).

The Proton donor/acceptor role is filled by Asp-89. Lys-154 functions as the Schiff-base intermediate with acetaldehyde in the catalytic mechanism. Lys-183 acts as the Proton donor/acceptor in catalysis.

It belongs to the DeoC/FbaB aldolase family. DeoC type 1 subfamily.

It is found in the cytoplasm. The catalysed reaction is 2-deoxy-D-ribose 5-phosphate = D-glyceraldehyde 3-phosphate + acetaldehyde. It functions in the pathway carbohydrate degradation; 2-deoxy-D-ribose 1-phosphate degradation; D-glyceraldehyde 3-phosphate and acetaldehyde from 2-deoxy-alpha-D-ribose 1-phosphate: step 2/2. Functionally, catalyzes a reversible aldol reaction between acetaldehyde and D-glyceraldehyde 3-phosphate to generate 2-deoxy-D-ribose 5-phosphate. This is Deoxyribose-phosphate aldolase from Thermoanaerobacter pseudethanolicus (strain ATCC 33223 / 39E) (Clostridium thermohydrosulfuricum).